The following is a 250-amino-acid chain: Prophage antitermination protein Q homolog QuuQ (250 aa).

It belongs to the phage antitermination Q type 2 family.

Positively regulate expression of some phage genes. Bacterial host RNA polymerase modified by antitermination proteins transcribes through termination sites that otherwise prevent expression of the regulated genes. This Escherichia coli (strain K12) protein is Prophage antitermination protein Q homolog QuuQ (quuQ).